The following is a 140-amino-acid chain: Gas vesicle protein O (140 aa).

Residues Met1–Ile14 show a composition bias toward basic and acidic residues. A disordered region spans residues Met1–Gln61. Positions Gln39–Gly56 are enriched in polar residues.

It belongs to the gas vesicle GvpO family. As to quaternary structure, forms homodimers, forms a GvpN-GvpO heterodimer, interacts with GvpC, GvpF, GvpI and GvpL, might interact with GvpA.

The protein resides in the gas vesicle. It is found in the cytoplasm. A minor component of the gas vesicle (GV), may play a role in transcription and/or RNA stability and/or in GV assembly. Gas vesicles are small, hollow, gas filled protein structures found in some microorganisms. They allow positioning of halobacteria at the optimal depth for growth in the poorly aerated shallow brine pools of their habitat. Functionally, expression of a 9.5 kb mc-vac DNA fragment containing 2 divergently transcribed regions (gvpD-gvpE-gvpF-gvpG-gvpH-gvpI-gvpJ-gvpK-gvpL-gvpM and gvpA-gvpC-gvpN-gvpO) allows H.volcanii to produce gas vesicles. The protein is Gas vesicle protein O of Haloferax mediterranei (strain ATCC 33500 / DSM 1411 / JCM 8866 / NBRC 14739 / NCIMB 2177 / R-4) (Halobacterium mediterranei).